A 407-amino-acid polypeptide reads, in one-letter code: Imidazolonepropionase (407 aa).

Fe(3+) contacts are provided by H68 and H70. 2 residues coordinate Zn(2+): H68 and H70. R77, Y140, and H173 together coordinate 4-imidazolone-5-propanoate. Y140 is a binding site for N-formimidoyl-L-glutamate. Residue H238 participates in Fe(3+) binding. H238 contacts Zn(2+). Q241 is a binding site for 4-imidazolone-5-propanoate. Residue D313 coordinates Fe(3+). Zn(2+) is bound at residue D313. 2 residues coordinate N-formimidoyl-L-glutamate: N315 and G317. Residue T318 participates in 4-imidazolone-5-propanoate binding.

This sequence belongs to the metallo-dependent hydrolases superfamily. HutI family. Zn(2+) is required as a cofactor. Fe(3+) serves as cofactor.

Its subcellular location is the cytoplasm. It catalyses the reaction 4-imidazolone-5-propanoate + H2O = N-formimidoyl-L-glutamate. It functions in the pathway amino-acid degradation; L-histidine degradation into L-glutamate; N-formimidoyl-L-glutamate from L-histidine: step 3/3. Its function is as follows. Catalyzes the hydrolytic cleavage of the carbon-nitrogen bond in imidazolone-5-propanoate to yield N-formimidoyl-L-glutamate. It is the third step in the universal histidine degradation pathway. The chain is Imidazolonepropionase from Burkholderia cenocepacia (strain HI2424).